Here is a 156-residue protein sequence, read N- to C-terminus: Transcriptional repressor NrdR (156 aa).

The segment at 3–34 (CPYCGETEDKVIDSRQGKEADVIRRRRECLSC) is a zinc-finger region. In terms of domain architecture, ATP-cone spans 49–139 (LVIIKKDGRR…VYREFKHVND (91 aa)).

Belongs to the NrdR family. Requires Zn(2+) as cofactor.

Negatively regulates transcription of bacterial ribonucleotide reductase nrd genes and operons by binding to NrdR-boxes. The polypeptide is Transcriptional repressor NrdR (Desulfatibacillum aliphaticivorans).